The primary structure comprises 124 residues: Fluoride-specific ion channel FluC 1 (124 aa).

The next 4 helical transmembrane spans lie at I7–I27, L32–L52, I58–L78, and A93–I113. The Na(+) site is built by G68 and T71.

Belongs to the fluoride channel Fluc/FEX (TC 1.A.43) family.

It is found in the cell inner membrane. The enzyme catalyses fluoride(in) = fluoride(out). With respect to regulation, na(+) is not transported, but it plays an essential structural role and its presence is essential for fluoride channel function. In terms of biological role, fluoride-specific ion channel. Important for reducing fluoride concentration in the cell, thus reducing its toxicity. The protein is Fluoride-specific ion channel FluC 1 of Prochlorococcus marinus (strain SARG / CCMP1375 / SS120).